The chain runs to 635 residues: Threonine--tRNA ligase (635 aa).

The region spanning 1–61 is the TGS domain; that stretch reads MVSIRLPDGS…DRDAALAIIT (61 aa). A catalytic region spans residues 242 to 533; it reads DHRKLGKQLD…LIEHHAGAMP (292 aa). Zn(2+) is bound by residues Cys333, His384, and His510.

This sequence belongs to the class-II aminoacyl-tRNA synthetase family. Homodimer. Requires Zn(2+) as cofactor.

The protein localises to the cytoplasm. It catalyses the reaction tRNA(Thr) + L-threonine + ATP = L-threonyl-tRNA(Thr) + AMP + diphosphate + H(+). Functionally, catalyzes the attachment of threonine to tRNA(Thr) in a two-step reaction: L-threonine is first activated by ATP to form Thr-AMP and then transferred to the acceptor end of tRNA(Thr). Also edits incorrectly charged L-seryl-tRNA(Thr). The sequence is that of Threonine--tRNA ligase from Burkholderia ambifaria (strain ATCC BAA-244 / DSM 16087 / CCUG 44356 / LMG 19182 / AMMD) (Burkholderia cepacia (strain AMMD)).